A 104-amino-acid chain; its full sequence is Pterin-4-alpha-carbinolamine dehydratase (104 aa).

Ala-2 is modified (N-acetylalanine). Substrate-binding positions include 61–63 and 78–81; these read DHH and STHE.

This sequence belongs to the pterin-4-alpha-carbinolamine dehydratase family. Homotetramer and homodimer. Heterotetramer with HNF1A; formed by a dimer of dimers. Interacts with HNF1B (via HNF-p1 domain); the interaction increases HNF1B transactivation activity. As to expression, mainly expressed in the liver, in pancreatic cells, and in the kidney, especially in the distal convoluted tubule, in the cortical thick ascending limb of Henle's loop and in the connecting tubule.

It is found in the cytoplasm. The protein localises to the nucleus. It catalyses the reaction (4aS,6R)-4a-hydroxy-L-erythro-5,6,7,8-tetrahydrobiopterin = (6R)-L-erythro-6,7-dihydrobiopterin + H2O. In terms of biological role, involved in tetrahydrobiopterin biosynthesis. Seems to both prevent the formation of 7-pterins and accelerate the formation of quinonoid-BH2. Coactivator for HNF1A-dependent transcription. Regulates the dimerization of homeodomain protein HNF1A and enhances its transcriptional activity. Also acts as a coactivator for HNF1B-dependent transcription. In Mus musculus (Mouse), this protein is Pterin-4-alpha-carbinolamine dehydratase (Pcbd1).